The primary structure comprises 67 residues: UPF0337 protein Atu4724 (67 aa).

The protein belongs to the UPF0337 (CsbD) family.

In Agrobacterium fabrum (strain C58 / ATCC 33970) (Agrobacterium tumefaciens (strain C58)), this protein is UPF0337 protein Atu4724.